Consider the following 78-residue polypeptide: MPREIKEIKEFLIKARRKDAKSVKIKKNPTNVKFKVRCSRFLYTLVITDKEKAEKLKQSLPPGLQVKEIKCRKSKTTP.

The protein belongs to the eukaryotic ribosomal protein eL38 family.

The protein is Large ribosomal subunit protein eL38 (RpL38) of Maconellicoccus hirsutus (Pink hibiscus mealybug).